Here is a 199-residue protein sequence, read N- to C-terminus: Large ribosomal subunit protein uL5 (199 aa).

The protein belongs to the universal ribosomal protein uL5 family. In terms of assembly, part of the 50S ribosomal subunit; part of the 5S rRNA/L5/L18/L25 subcomplex. Contacts the 5S rRNA and the P site tRNA. Forms a bridge to the 30S subunit in the 70S ribosome.

In terms of biological role, this is one of the proteins that bind and probably mediate the attachment of the 5S RNA into the large ribosomal subunit, where it forms part of the central protuberance. In the 70S ribosome it contacts protein S13 of the 30S subunit (bridge B1b), connecting the 2 subunits; this bridge is implicated in subunit movement. Contacts the P site tRNA; the 5S rRNA and some of its associated proteins might help stabilize positioning of ribosome-bound tRNAs. The polypeptide is Large ribosomal subunit protein uL5 (Frankia casuarinae (strain DSM 45818 / CECT 9043 / HFP020203 / CcI3)).